We begin with the raw amino-acid sequence, 269 residues long: MKSFSNIDFSKLSLIDSIIATSQIIREDFPTKFVISDLYNKVKEAKFYISSEIEPNLKLKKLLKLFYKTWNFGAASGIYKLSDVLWIDNVLKTRQGTAVSLGILFLHIAQELKLPLNPVVFPTQLILRADWINKKKWLINPFNGEMLDQHTLEVWLKGNISPTAELYEHDLYKAESITVIRKMLDILKSALMEEKKMELALNVSNLLLQINPNDPYEIRDRGLIYANLECNHVALTDLIYFVEHCPEDPISEIIKVQIHAIEQKKMILH.

It belongs to the UPF0162 family.

The sequence is that of UPF0162 protein BUsg_167 from Buchnera aphidicola subsp. Schizaphis graminum (strain Sg).